Consider the following 372-residue polypeptide: N-methyl-L-tryptophan oxidase (372 aa).

Residue 4–34 (DLIIIGSGSVGAAAGYYATRAGLKVLMTDAH) participates in FAD binding. An S-8alpha-FAD cysteine modification is found at Cys-307.

It belongs to the MSOX/MTOX family. MTOX subfamily. In terms of assembly, monomer. FAD serves as cofactor.

It carries out the reaction N(alpha)-methyl-L-tryptophan + O2 + H2O = L-tryptophan + formaldehyde + H2O2. Its function is as follows. Catalyzes the oxidative demethylation of N-methyl-L-tryptophan. This Citrobacter koseri (strain ATCC BAA-895 / CDC 4225-83 / SGSC4696) protein is N-methyl-L-tryptophan oxidase.